Here is an 80-residue protein sequence, read N- to C-terminus: Conotoxin Vi6.2 (80 aa).

Residues 1–22 (MKLTCVLITTVLFLTASQLITA) form the signal peptide. Positions 23–47 (DYSRDKRQYRAVRLRDEMRNFKGAR) are excised as a propeptide. 3 disulfides stabilise this stretch: Cys-49–Cys-62, Cys-56–Cys-67, and Cys-61–Cys-77. 2 positions are modified to 4-hydroxyproline: Pro-60 and Pro-63.

It belongs to the conotoxin O1 superfamily. Expressed by the venom duct.

The protein resides in the secreted. Ion channel inhibitor that inhibits the increase in intracellular calcium upon depolarization in DRG neurons. In vivo, both intraperitoneal and intracranial injections into mice induce hyperactivity. This is Conotoxin Vi6.2 from Conus virgo (Virgin cone).